Consider the following 88-residue polypeptide: Small ribosomal subunit protein bS16 (88 aa).

Belongs to the bacterial ribosomal protein bS16 family.

The protein is Small ribosomal subunit protein bS16 of Geotalea daltonii (strain DSM 22248 / JCM 15807 / FRC-32) (Geobacter daltonii).